The following is a 319-amino-acid chain: Pantothenate kinase (319 aa).

Residue 96-103 coordinates ATP; that stretch reads GSVAVGKS.

This sequence belongs to the prokaryotic pantothenate kinase family.

It localises to the cytoplasm. The catalysed reaction is (R)-pantothenate + ATP = (R)-4'-phosphopantothenate + ADP + H(+). Its pathway is cofactor biosynthesis; coenzyme A biosynthesis; CoA from (R)-pantothenate: step 1/5. The sequence is that of Pantothenate kinase from Bacillus velezensis (strain DSM 23117 / BGSC 10A6 / LMG 26770 / FZB42) (Bacillus amyloliquefaciens subsp. plantarum).